The chain runs to 358 residues: Aminomethyltransferase (358 aa).

It belongs to the GcvT family. The glycine cleavage system is composed of four proteins: P, T, L and H.

The catalysed reaction is N(6)-[(R)-S(8)-aminomethyldihydrolipoyl]-L-lysyl-[protein] + (6S)-5,6,7,8-tetrahydrofolate = N(6)-[(R)-dihydrolipoyl]-L-lysyl-[protein] + (6R)-5,10-methylene-5,6,7,8-tetrahydrofolate + NH4(+). In terms of biological role, the glycine cleavage system catalyzes the degradation of glycine. This is Aminomethyltransferase from Francisella tularensis subsp. mediasiatica (strain FSC147).